Reading from the N-terminus, the 104-residue chain is uncharacterized protein (104 aa).

A run of 2 helical transmembrane segments spans residues 53–73 (IWGI…NWDF) and 74–94 (ILNL…LILI).

It localises to the cell membrane. This is an uncharacterized protein from Methanocaldococcus jannaschii (strain ATCC 43067 / DSM 2661 / JAL-1 / JCM 10045 / NBRC 100440) (Methanococcus jannaschii).